We begin with the raw amino-acid sequence, 192 residues long: dITP/XTP pyrophosphatase (192 aa).

Position 12 to 17 (12 to 17 (TNNENK)) interacts with substrate. Glu-41 and Asp-70 together coordinate Mg(2+). The Proton acceptor role is filled by Asp-70. Substrate contacts are provided by residues Ser-71, 145–148 (FGFD), Lys-168, and 173–174 (HR).

It belongs to the HAM1 NTPase family. Homodimer. It depends on Mg(2+) as a cofactor.

The enzyme catalyses XTP + H2O = XMP + diphosphate + H(+). The catalysed reaction is dITP + H2O = dIMP + diphosphate + H(+). It catalyses the reaction ITP + H2O = IMP + diphosphate + H(+). Its function is as follows. Pyrophosphatase that catalyzes the hydrolysis of nucleoside triphosphates to their monophosphate derivatives, with a high preference for the non-canonical purine nucleotides XTP (xanthosine triphosphate), dITP (deoxyinosine triphosphate) and ITP. Seems to function as a house-cleaning enzyme that removes non-canonical purine nucleotides from the nucleotide pool, thus preventing their incorporation into DNA/RNA and avoiding chromosomal lesions. The chain is dITP/XTP pyrophosphatase from Saccharolobus solfataricus (strain ATCC 35092 / DSM 1617 / JCM 11322 / P2) (Sulfolobus solfataricus).